Reading from the N-terminus, the 888-residue chain is MPLKEDDCCLFAEEYDGPPLSYNIPCAVPINVEKIPVAAVVSPVCISDNMSFPVIQPILSVESKKFLIDSVSPTSVIANCGSNQLELVSDSITVSPTSVIEHTEEEEEEEGGDGEDCELSSSGELLLRSCSVKESLDLNESSSNPLVPDWESNESVLSMDYPSSRVTGDCVSETNGDGKKQPVVTFLGIASDDGFEEEESCSNLRRVRVVPVKKQPQTKGKKGSCYRCFKGSRFTEKEVCLVCDAKYCNSCVLRAMGSMPEGRKCVTCIGFPIDESKRGSLGKCSRMLKRLLNDLEVKQIMKTERFCEANQLPAEYVYVNGQPLYPEELVTLQTCSNPPKKLKPGDYWYDKVSGLWGKEGEKPYQIISPHLNVGGPISPEASNGNTQVFINGREITKVELRMLQLAGVQCAGNPHFWVNEDGSYQEEGQKNTKGYIWGKAGTKLLCAVLSLPVPSKSTANASGEQLYSANSRSILDHLEHRTLQKILLVGNSGSGTSTIFKQAKILYKDVPFLEDERENIKVIIQTNVYGYLGMLLEGRERFEEEALALRNTKQCVLENIPADEGDAKSNDKTVTMYSIGPRLKAFSDWLLKTMAAGNLGVIFPAASREYAPLVEELWRDAAIQATYKRRSELGLLPSVASYFLERAIDVLTPDYEPSDLDILYAEGVTSSSGLACLDFSFPQTASEENLDPSDHHDSLLRYQLIRVPSRGLGENCKWIDMFEDVGMVVFVVSMSDYDQVSEDGTNKMLLTKKLFESIITHPIFENMDFLLILNKYDLLEEKVERVPLARCEWFQDFNPVVSRHRGSNNGNPTLGQLAFHFMAVKFKRFYSSLTGKKLFVSSSKSLDPNSVDSSLKLAMEILKWSEERTNICMSEYSMYSTEPSSFSN.

A disordered region spans residues 98-119; the sequence is SVIEHTEEEEEEEGGDGEDCEL. Positions 103–118 are enriched in acidic residues; the sequence is TEEEEEEEGGDGEDCE. Positions 205 to 222 match the Nuclear localization signal motif; the sequence is RRVRVVPVKKQPQTKGKK. The segment at 225-268 adopts an RING-type; degenerate zinc-finger fold; that stretch reads CYRCFKGSRFTEKEVCLVCDAKYCNSCVLRAMGSMPEGRKCVTC. A G-alpha domain is found at 482-879; that stretch reads TLQKILLVGN…NICMSEYSMY (398 aa). Residues 485-498 are G1 motif; it reads KILLVGNSGSGTST. Residues 490–498 and 661–669 each bind GTP; these read GNSGSGTST and DILYAEGVT. 2 residues coordinate Ca(2+): Ser497 and Thr669. Residues 661 to 669 are G2 motif; sequence DILYAEGVT. The G3 motif stretch occupies residues 702 to 711; that stretch reads YQLIRVPSRG. A G4 motif region spans residues 770-777; the sequence is LLILNKYD. 774–777 serves as a coordination point for GTP; that stretch reads NKYD. The interval 843 to 848 is G5 motif; that stretch reads SKSLDP.

The protein belongs to the G-alpha family. XLG subfamily. Ca(2+) serves as cofactor. In terms of tissue distribution, ubiquitous. Strongly expressed in vascular tissues, root and shoot meristems and lateral root primordia.

The protein resides in the nucleus. In terms of biological role, guanine nucleotide-binding proteins (G proteins) are involved as modulators or transducers in various transmembrane signaling systems. Binds GTP with specificity. Plays a role in the root morphogenesis by regulation of the cell proliferation. The protein is Extra-large guanine nucleotide-binding protein 1 (XLG1) of Arabidopsis thaliana (Mouse-ear cress).